We begin with the raw amino-acid sequence, 438 residues long: Protein translocase subunit SecY (438 aa).

The chain crosses the membrane as a helical span at residues 1–43 (MKIKPILELIPEVKRPLKGVSFKEKIQWTGLVLILYFILGTID). The Extracellular segment spans residues 44 to 54 (IYMGGAEMPAM). Residues 55 to 62 (FAFWQTVT) constitute an intramembrane region (helical). A discontinuously helical membrane pass occupies residues 55 to 83 (FAFWQTVTASKMGTLITLGIGPIVTAGII). An intramembrane segment occupies 63-74 (ASKMGTLITLGI). The helical intramembrane region spans 75-83 (GPIVTAGII). Over 84–104 (MQLLVGSELISLDLSKPMNRA) the chain is Cytoplasmic. A helical transmembrane segment spans residues 105 to 129 (LFQGLQKLFGIFLCFLEAVMFVGAG). Over 130–136 (AFGVVNS) the chain is Extracellular. The helical transmembrane segment at 137–161 (TLALILVLQLALGAILVIYLDEIVS) threads the bilayer. Residues 162–167 (RYGIGS) lie on the Cytoplasmic side of the membrane. A helical transmembrane segment spans residues 168–186 (GIGLFIAAGVAQTIFVGAF). At 187-209 (GAEGYLWKFFSAMSVGSLGIAFE) the chain is on the extracellular side. The helical transmembrane segment at 210–231 (YILPILSTLFVFLVVVYVESIR) threads the bilayer. The Cytoplasmic portion of the chain corresponds to 232 to 256 (VEIPLAHGRVKGAVGKYPIKFIYVS). Residues 257-278 (NLPVILAAALFANIQLWGMFLD) traverse the membrane as a helical segment. Residues 279-315 (RMGYPILGQYSNGTAVSGIAYYFSTPYGISNIISDPL) lie on the Extracellular side of the membrane. The helical transmembrane segment at 316–335 (HAIFYTLMMVIFCILFGLFW) threads the bilayer. The Cytoplasmic portion of the chain corresponds to 336–378 (VETSGLDAKSMAKKLGNLDMAIKGFRKSQKSIEQRLKRYIKPI). Residues 379-397 (TVMGSAFVGFLAAAADFTG) form a helical membrane-spanning segment. The Extracellular portion of the chain corresponds to 398-400 (ALG). A helical transmembrane segment spans residues 401–415 (GGTGVLLTVSIVYRL). The Cytoplasmic portion of the chain corresponds to 416-438 (YEQLVQEQLSELHPAVAKFVGKR).

Belongs to the SecY/SEC61-alpha family. As to quaternary structure, component of the Sec protein translocase complex. Heterotrimer consisting of alpha (SecY), beta (SecG) and gamma (SecE) subunits. The heterotrimers can form oligomers, although 1 heterotrimer is thought to be able to translocate proteins. Interacts with the ribosome. May interact with SecDF, and other proteins may be involved.

The protein localises to the cell membrane. Its function is as follows. The central subunit of the protein translocation channel SecYEG. Consists of two halves formed by TMs 1-5 and 6-10. These two domains form a lateral gate at the front which open onto the bilayer between TMs 2 and 7, and are clamped together by SecE at the back. The channel is closed by both a pore ring composed of hydrophobic SecY resides and a short helix (helix 2A) on the extracellular side of the membrane which forms a plug. The plug probably moves laterally to allow the channel to open. The ring and the pore may move independently. The protein is Protein translocase subunit SecY of Methanococcus vannielii.